We begin with the raw amino-acid sequence, 126 residues long: uncharacterized protein (126 aa).

The N-terminal stretch at 1–23 is a signal peptide; the sequence is MLKKLIMGFFLLILLGIAGVAVM.

This is an uncharacterized protein from Archaeoglobus fulgidus (strain ATCC 49558 / DSM 4304 / JCM 9628 / NBRC 100126 / VC-16).